The sequence spans 894 residues: Histone-lysine N-methyltransferase PRDM9 (894 aa).

Disordered regions lie at residues 1–23 and 143–174; these read MSPE…RKPM and SGSE…LRKK. Residues 23 to 86 form the KRAB-related domain; it reads MVKDAFKDIS…RRQAIKLQVD (64 aa). The span at 143–164 shows a compositional bias: polar residues; the sequence is SGSEQAQKPVSPSGEASTSGQH. 4 residues coordinate Zn(2+): C205, C208, C216, and H219. One can recognise an SET domain in the interval 244 to 358; that stretch reads PGLRIGPSGI…PGCELLVWYG (115 aa). S-adenosyl-L-methionine is bound by residues 256-258, Y291, and 320-321; these read AGL and NC. 288–294 is a substrate binding site; that stretch reads NNGYSWL. Y357 provides a ligand contact to substrate. An N6,N6,N6-trimethyllysine; alternate modification is found at K368. K368 carries the post-translational modification N6-methyllysine; alternate. K372 and K374 each carry N6-methyllysine. The C2H2-type 1 zinc finger occupies 388–411; that stretch reads HPCPSCCLAFSSQKFLSQHVERNH. Residues C390, C393, H406, and H411 each contribute to the Zn(2+) site. Residues 408-469 are disordered; it reads ERNHSSQNFP…SKLLNKRTWQ (62 aa). The span at 444–461 shows a compositional bias: basic and acidic residues; sequence PHSRNDKTKGQEIKERSK. Residues 524–546 form a C2H2-type 2; degenerate zinc finger; the sequence is VKYGECGQGFSVKSDVITHQRTH. 12 consecutive C2H2-type zinc fingers follow at residues 552–574, 580–602, 608–630, 636–658, 664–686, 692–714, 720–742, 748–770, 776–798, 804–826, 832–854, and 860–882; these read YVCR…QRIH, YVCR…QRTH, and YVCR…QRRH. Zn(2+) is bound by residues C722, C725, H738, H742, C750, C753, H766, H770, C778, C781, H794, H798, C806, C809, H822, and H826. A DNA-binding region spans residues 730-820; the sequence is SNKSHLLRHQ…RGFSNKSHLL (91 aa).

The protein belongs to the class V-like SAM-binding methyltransferase superfamily. Homodimer. Interacts with EHMT2 and CDYL; interaction only takes place when PRDM9 is bound to hotspot DNA. Interacts with CXXC1; this interaction does not link PRDM9-activated recombination hotspot sites with DSB machinery and is not required for the hotspot recognition pathway. Forms a complex with EWSR1, REC8, SYCP3 and SYCP1; complex formation is dependent of phosphorylated form of REC8 and requires PRDM9 bound to hotspot DNA; EWSR1 joins PRDM9 with the chromosomal axis through REC8. In terms of processing, mono-methylated; automethylated. Tri-methylated; automethylated. Mono-methylation is predominant; automethylation is lower and slower than H3 peptide methylation and is in a highest S-adenosyl-L-methionine concentration-dependent. There are two major sites for automethylation at Lys-368 and Lys-374. Lysines can be simultaneously methylated, such as Lys-368(me3)/Lys-372(me1), Lys-368(me1)/Lys-374(me1) and Lys-368(me1)/Lys-372(me1)/Lys-374(me1). Automethylation is an intramolecular (cis) process.

The protein resides in the nucleus. It is found in the chromosome. It catalyses the reaction L-lysyl-[protein] + S-adenosyl-L-methionine = N(6)-methyl-L-lysyl-[protein] + S-adenosyl-L-homocysteine + H(+). It carries out the reaction N(6)-methyl-L-lysyl-[protein] + S-adenosyl-L-methionine = N(6),N(6)-dimethyl-L-lysyl-[protein] + S-adenosyl-L-homocysteine + H(+). The enzyme catalyses L-lysyl(4)-[histone H3] + 3 S-adenosyl-L-methionine = N(6),N(6),N(6)-trimethyl-L-lysyl(4)-[histone H3] + 3 S-adenosyl-L-homocysteine + 3 H(+). The catalysed reaction is L-lysyl(36)-[histone H3] + 3 S-adenosyl-L-methionine = N(6),N(6),N(6)-trimethyl-L-lysyl(36)-[histone H3] + 3 S-adenosyl-L-homocysteine + 3 H(+). It catalyses the reaction L-lysyl(9)-[histone H3] + 3 S-adenosyl-L-methionine = N(6),N(6),N(6)-trimethyl-L-lysyl(9)-[histone H3] + 3 S-adenosyl-L-homocysteine + 3 H(+). It carries out the reaction L-lysyl(20)-[histone H4] + S-adenosyl-L-methionine = N(6)-methyl-L-lysyl(20)-[histone H4] + S-adenosyl-L-homocysteine + H(+). The enzyme catalyses N(6)-methyl-L-lysyl(20)-[histone H4] + S-adenosyl-L-methionine = N(6),N(6)-dimethyl-L-lysyl(20)-[histone H4] + S-adenosyl-L-homocysteine + H(+). Its activity is regulated as follows. Inhibited by suramin with an IC(50) of 4.1 uM. Its function is as follows. Histone methyltransferase that sequentially mono-, di-, and tri-methylates both 'Lys-4' (H3K4) and 'Lys-36' (H3K36) of histone H3 to produce respectively trimethylated 'Lys-4' (H3K4me3) and trimethylated 'Lys-36' (H3K36me3) histone H3 and plays a key role in meiotic prophase by determining hotspot localization thereby promoting meiotic recombination. Can also methylate all four core histones with H3 being the best substrate and the most highly modified. Is also able, on one hand, to mono and di-methylate H4K20 and on other hand to trimethylate H3K9 with the di-methylated H3K9 as the best substrate. During meiotic prophase, binds specific DNA sequences through its zinc finger domains thereby determining hotspot localization where it promotes local H3K4me3 and H3K36me3 enrichment on the same nucleosomes through its histone methyltransferase activity. Thereby promotes double-stranded breaks (DSB) formation, at this subset of PRDM9-binding sites, that initiates meiotic recombination for the proper meiotic progression. During meiotic progression hotspot-bound PRDM9 interacts with several complexes; in early leptonema binds CDYL and EHMT2 followed by EWSR1 and CXXC1 by the end of leptonema. EWSR1 joins PRDM9 with the chromosomal axis through REC8. In this way, controls the DSB repair pathway, pairing of homologous chromosomes and sex body formation. Moreover plays a central role in the transcriptional activation of genes during early meiotic prophase thanks to H3K4me3 and H3K36me3 enrichment that represents a specific tag for epigenetic transcriptional activation. In addition performs automethylation. Acetylation and phosphorylation of histone H3 attenuate or prevent histone H3 methylation. The polypeptide is Histone-lysine N-methyltransferase PRDM9 (Homo sapiens (Human)).